A 173-amino-acid polypeptide reads, in one-letter code: Ribosome maturation factor RimM (173 aa).

Residues Pro-96–Leu-169 enclose the PRC barrel domain.

Belongs to the RimM family. In terms of assembly, binds ribosomal protein uS19.

Its subcellular location is the cytoplasm. Functionally, an accessory protein needed during the final step in the assembly of 30S ribosomal subunit, possibly for assembly of the head region. Essential for efficient processing of 16S rRNA. May be needed both before and after RbfA during the maturation of 16S rRNA. It has affinity for free ribosomal 30S subunits but not for 70S ribosomes. This is Ribosome maturation factor RimM from Mycobacterium sp. (strain JLS).